An 80-amino-acid chain; its full sequence is Defensin-like protein 50 (80 aa).

A signal peptide spans 1–27; the sequence is MGFTKIVVTFFLVVMLAVSSSSQNAMA. Cystine bridges form between Cys-39–Cys-79, Cys-43–Cys-66, Cys-52–Cys-77, and Cys-56–Cys-78.

Belongs to the DEFL family.

The protein resides in the secreted. In Arabidopsis thaliana (Mouse-ear cress), this protein is Defensin-like protein 50 (LCR49).